A 285-amino-acid chain; its full sequence is Nucleotide-binding protein Avin_12760 (285 aa).

8–15 provides a ligand contact to ATP; sequence GRSGSGKS. Residue 60-63 participates in GTP binding; that stretch reads DARN.

This sequence belongs to the RapZ-like family.

Displays ATPase and GTPase activities. This is Nucleotide-binding protein Avin_12760 from Azotobacter vinelandii (strain DJ / ATCC BAA-1303).